A 1613-amino-acid polypeptide reads, in one-letter code: Reverse gyrase (1613 aa).

An RG N-terminal-type zinc finger spans residues 1 to 38 (MIPMIYKEMCPNCNGEITSERLAIGVCEKCLKEENVFE). Zn(2+) contacts are provided by cysteine 10, cysteine 13, cysteine 27, and cysteine 30. ATP-binding positions include glutamine 83 and 100–107 (VPTGVGKS). The 205-residue stretch at 87 to 291 (AKRVLKNKSF…LYRELLDFEI (205 aa)) folds into the Helicase ATP-binding domain. The short motif at 203 to 206 (DDVD) is the DEAD box element. The 216-residue stretch at 310-525 (SKEKILEYIK…IDEVNLEELI (216 aa)) folds into the Helicase C-terminal domain. Residues 546 to 1613 (DLLKSVLMVV…ALHEEILSIR (1068 aa)) form a topoisomerase I region. The Toprim domain maps to 550–712 (SVLMVVESPN…NIYRVGFNEI (163 aa)). Mg(2+) is bound by residues glutamate 556 and aspartate 681. The Topo IA-type catalytic domain occupies 733–1613 (DENKVKGQVV…ALHEEILSIR (881 aa)). Positions 1070–1199 (FAGLVLGDGS…IGIYLNSIGI (130 aa)) constitute a DOD-type homing endonuclease domain. The O-(5'-phospho-DNA)-tyrosine intermediate role is filled by tyrosine 1363.

It in the N-terminal section; belongs to the DEAD box helicase family. DDVD subfamily. The protein in the C-terminal section; belongs to the type IA topoisomerase family. Monomer. It depends on Zn(2+) as a cofactor. Mg(2+) serves as cofactor. This protein undergoes a protein self splicing that involves a post-translational excision of the intervening region (intein) followed by peptide ligation.

It is found in the cytoplasm. It carries out the reaction ATP + H2O = ADP + phosphate + H(+). In terms of biological role, modifies the topological state of DNA by introducing positive supercoils in an ATP-dependent process, increasing the linking number in steps of +1. Binds to single-stranded DNA, transiently cleaves and then rejoins the ends, introducing a positive supercoil in the process. The scissile phosphodiester is attacked by the catalytic tyrosine of the enzyme, resulting in the formation of a DNA-(5'-phosphotyrosyl)-enzyme intermediate. Probably involved in rewinding DNA strands in regions of the chromosome that have opened up to allow replication, transcription, DNA repair and/or for DNA protection. In Methanocaldococcus jannaschii (strain ATCC 43067 / DSM 2661 / JAL-1 / JCM 10045 / NBRC 100440) (Methanococcus jannaschii), this protein is Reverse gyrase.